The chain runs to 368 residues: MNLDKLQQWLQDSNNDIAYISNPITISYFTGYSMDPHERIFALLVFKDANPFIFCPALNVEEAKNSEWNGDVFGYLDSEDPWELIADNVRKRTSDTHTWAIEKDDLSVAHYQYLRGEFPNASFTNDVSSFIERLRLYKTPEEIKKLQGAGAEADFAFKIGFDAIRTGVTERSIAGQIDYQLKIQKGVMHESFETIVQAGKNAANPHLGPTMNTVQPNELVLFDLGTMHDGYASDSSRTVAYGTPSDKQREIYEVDREAQQAAIEAAKPGITAEELDSVARDIITKAGYGEYFIHRLGHGIGKNVHEYPSIVQGNDLVLEEGMCFSIEPGIYIPGFAGVRIEDCGVVTKDGFKTFTHTDKDLKIIPIRD.

Positions 223, 234, 298, 327, and 341 each coordinate Mn(2+).

It belongs to the peptidase M24B family. Mn(2+) is required as a cofactor.

The protein resides in the cytoplasm. It carries out the reaction Xaa-L-Pro dipeptide + H2O = an L-alpha-amino acid + L-proline. This chain is Xaa-Pro dipeptidase (pepQ), found in Lactobacillus helveticus (Lactobacillus suntoryeus).